A 95-amino-acid chain; its full sequence is uncharacterized protein (95 aa).

Phosphate is bound at residue lysine 21. Aspartate 44 is a binding site for Mg(2+). Position 47 (asparagine 47) interacts with phosphate.

Belongs to the HAD-like hydrolase superfamily. Cof family. The cofactor is Mg(2+).

This is an uncharacterized protein from Geobacillus stearothermophilus (Bacillus stearothermophilus).